Here is a 922-residue protein sequence, read N- to C-terminus: DNA gyrase subunit A (922 aa).

A compositionally biased stretch (low complexity) spans 1 to 14 (MTETPTDGGSTPPS). Residues 1–24 (MTETPTDGGSTPPSDGGGPGGRIE) form a disordered region. Residues 49–518 (LPDVRDGLKP…ADGDLSMEDL (470 aa)) form the Topo IIA-type catalytic domain. The active-site O-(5'-phospho-DNA)-tyrosine intermediate is Tyr137. The GyrA-box motif lies at 545-551 (QRRGGKG). Residues 861-922 (EANGDDELDE…TEPDPGESDG (62 aa)) form a disordered region. Acidic residues-rich tracts occupy residues 863 to 890 (NGDD…DESA) and 912 to 922 (DTEPDPGESDG).

The protein belongs to the type II topoisomerase GyrA/ParC subunit family. As to quaternary structure, heterotetramer, composed of two GyrA and two GyrB chains. In the heterotetramer, GyrA contains the active site tyrosine that forms a transient covalent intermediate with DNA, while GyrB binds cofactors and catalyzes ATP hydrolysis.

It is found in the cytoplasm. The enzyme catalyses ATP-dependent breakage, passage and rejoining of double-stranded DNA.. Its function is as follows. A type II topoisomerase that negatively supercoils closed circular double-stranded (ds) DNA in an ATP-dependent manner to modulate DNA topology and maintain chromosomes in an underwound state. Negative supercoiling favors strand separation, and DNA replication, transcription, recombination and repair, all of which involve strand separation. Also able to catalyze the interconversion of other topological isomers of dsDNA rings, including catenanes and knotted rings. Type II topoisomerases break and join 2 DNA strands simultaneously in an ATP-dependent manner. The chain is DNA gyrase subunit A from Nocardioides sp. (strain ATCC BAA-499 / JS614).